The sequence spans 341 residues: Holliday junction branch migration complex subunit RuvB (341 aa).

The segment at 1–180 (MAKSHTLNPE…FGIQLRLDYY (180 aa)) is large ATPase domain (RuvB-L). Residues Leu19, Arg20, Gly61, Lys64, Thr65, Thr66, Arg170, Tyr180, and Arg217 each contribute to the ATP site. Mg(2+) is bound at residue Thr65. Residues 181 to 251 (NDEEMKEIVL…LCLKAFEKMG (71 aa)) are small ATPAse domain (RuvB-S). Residues 254–341 (DLGLDGMDRQ…ENHGQDPTLF (88 aa)) are head domain (RuvB-H). Positions 309 and 314 each coordinate DNA.

This sequence belongs to the RuvB family. As to quaternary structure, homohexamer. Forms an RuvA(8)-RuvB(12)-Holliday junction (HJ) complex. HJ DNA is sandwiched between 2 RuvA tetramers; dsDNA enters through RuvA and exits via RuvB. An RuvB hexamer assembles on each DNA strand where it exits the tetramer. Each RuvB hexamer is contacted by two RuvA subunits (via domain III) on 2 adjacent RuvB subunits; this complex drives branch migration. In the full resolvosome a probable DNA-RuvA(4)-RuvB(12)-RuvC(2) complex forms which resolves the HJ.

The protein resides in the cytoplasm. It catalyses the reaction ATP + H2O = ADP + phosphate + H(+). The RuvA-RuvB-RuvC complex processes Holliday junction (HJ) DNA during genetic recombination and DNA repair, while the RuvA-RuvB complex plays an important role in the rescue of blocked DNA replication forks via replication fork reversal (RFR). RuvA specifically binds to HJ cruciform DNA, conferring on it an open structure. The RuvB hexamer acts as an ATP-dependent pump, pulling dsDNA into and through the RuvAB complex. RuvB forms 2 homohexamers on either side of HJ DNA bound by 1 or 2 RuvA tetramers; 4 subunits per hexamer contact DNA at a time. Coordinated motions by a converter formed by DNA-disengaged RuvB subunits stimulates ATP hydrolysis and nucleotide exchange. Immobilization of the converter enables RuvB to convert the ATP-contained energy into a lever motion, pulling 2 nucleotides of DNA out of the RuvA tetramer per ATP hydrolyzed, thus driving DNA branch migration. The RuvB motors rotate together with the DNA substrate, which together with the progressing nucleotide cycle form the mechanistic basis for DNA recombination by continuous HJ branch migration. Branch migration allows RuvC to scan DNA until it finds its consensus sequence, where it cleaves and resolves cruciform DNA. This is Holliday junction branch migration complex subunit RuvB from Leptospira borgpetersenii serovar Hardjo-bovis (strain L550).